Reading from the N-terminus, the 687-residue chain is Leucine-rich repeat and fibronectin type III domain-containing protein 1-like protein (687 aa).

A signal peptide spans 1–17 (MEWLIFSLLLLAVSASG). The LRRNT domain maps to 18–51 (QLCPKRCMCQNLSPSLAILCAKTGLLFVPTVIDR). The Extracellular segment spans residues 18–527 (QLCPKRCMCQ…LRSHFLGGTM (510 aa)). 7 LRR repeats span residues 52-73 (RTVE…DFAN), 76-97 (SLLH…TFAD), 100-121 (RLRA…HFRG), 124-145 (NLRH…AFDD), 149-170 (TLED…TIGR), 173-194 (NVNT…IFSN), and 197-218 (KLAR…PLFL). N73 carries N-linked (GlcNAc...) asparagine glycosylation. Positions 241–287 (NPLHCNCELLWLRRLTREDDLETCASPPDLTAKYFWTIPEEEFICDP) constitute an LRRCT domain. The region spanning 287–376 (PPVITRKSPK…STGTVELVVS (90 aa)) is the Ig-like domain. C309 and C358 form a disulfide bridge. Residues N331, N340, N346, N383, N410, and N450 are each glycosylated (N-linked (GlcNAc...) asparagine). Positions 384-412 (STNRIREPDPGPSDILTSAKSTSSVSNET) are disordered. Positions 398–412 (ILTSAKSTSSVSNET) are enriched in polar residues. One can recognise a Fibronectin type-III domain in the interval 415–510 (QERKVVLAEL…VGCVTFVTET (96 aa)). A helical membrane pass occupies residues 528-548 (IIIIGGIIVASVLVFIIILMI). The Cytoplasmic segment spans residues 549-687 (RYKVYSQHGA…AQRDWSDFKI (139 aa)). Disordered regions lie at residues 563 to 601 (GTAM…GSLG) and 630 to 687 (EDIV…DFKI). Polar residues-rich tracts occupy residues 565–576 (AMTNVRSQTNGG) and 657–672 (EGTS…SPQV). The segment covering 673–687 (SDEKKAQRDWSDFKI) has biased composition (basic and acidic residues).

It belongs to the LRFN family.

The protein localises to the membrane. It is found in the synapse. Its function is as follows. May be involved in the regulation of excitatory synapses. This chain is Leucine-rich repeat and fibronectin type III domain-containing protein 1-like protein (lrfn1l), found in Danio rerio (Zebrafish).